Consider the following 111-residue polypeptide: UPF0339 protein ACIAD0721 (111 aa).

2 repeat units span residues 10-58 and 61-109. The interval 89-111 is disordered; sequence SRDKGIESVKNNGTTATVKDLTG.

The protein belongs to the UPF0339 family. Duplicated subfamily.

This is UPF0339 protein ACIAD0721 from Acinetobacter baylyi (strain ATCC 33305 / BD413 / ADP1).